A 395-amino-acid chain; its full sequence is Oxalate oxidoreductase subunit alpha (395 aa).

As to quaternary structure, dimer of heterotrimer of one alpha, one beta and one delta subunit.

The enzyme catalyses oxidized 2[4Fe-4S]-[ferredoxin] + oxalate = reduced 2[4Fe-4S]-[ferredoxin] + 2 CO2. Functionally, catalyzes the anaerobic oxidation of oxalate using a broad range of electron acceptors, including ferredoxin and the nickel-dependent carbon monoxide dehydrogenase. Does not require coenzyme A as cosubstrate. Enables anaerobic growth on oxalate which is used as energy source by the bacteria. The chain is Oxalate oxidoreductase subunit alpha from Moorella thermoacetica (strain ATCC 39073 / JCM 9320).